A 256-amino-acid polypeptide reads, in one-letter code: 5-keto-4-deoxy-D-glucarate aldolase (256 aa).

His50 functions as the Proton acceptor in the catalytic mechanism. Gln151 lines the substrate pocket. Position 153 (Glu153) interacts with Mg(2+). Ser178 and Asp179 together coordinate substrate. Residue Asp179 coordinates Mg(2+).

This sequence belongs to the HpcH/HpaI aldolase family. KDGluc aldolase subfamily. As to quaternary structure, homohexamer; trimer of dimers. Mg(2+) is required as a cofactor.

It catalyses the reaction 5-dehydro-4-deoxy-D-glucarate = 2-hydroxy-3-oxopropanoate + pyruvate. The enzyme catalyses 2-dehydro-3-deoxy-D-glucarate = 2-hydroxy-3-oxopropanoate + pyruvate. It participates in carbohydrate acid metabolism; galactarate degradation; D-glycerate from galactarate: step 2/3. In terms of biological role, catalyzes the reversible retro-aldol cleavage of both 5-keto-4-deoxy-D-glucarate and 2-keto-3-deoxy-D-glucarate to pyruvate and tartronic semialdehyde. The protein is 5-keto-4-deoxy-D-glucarate aldolase of Salmonella gallinarum (strain 287/91 / NCTC 13346).